We begin with the raw amino-acid sequence, 356 residues long: tRNA-specific 2-thiouridylase MnmA (356 aa).

Residues Gly-6–Ser-13 and Leu-32 contribute to the ATP site. Cys-102 serves as the catalytic Nucleophile. Cys-102 and Cys-200 are oxidised to a cystine. Gly-127 contributes to the ATP binding site. The interval Arg-150–Gln-152 is interaction with tRNA. Cys-200 functions as the Cysteine persulfide intermediate in the catalytic mechanism. The tract at residues Arg-302–Tyr-303 is interaction with tRNA.

Belongs to the MnmA/TRMU family.

It localises to the cytoplasm. It carries out the reaction S-sulfanyl-L-cysteinyl-[protein] + uridine(34) in tRNA + AH2 + ATP = 2-thiouridine(34) in tRNA + L-cysteinyl-[protein] + A + AMP + diphosphate + H(+). In terms of biological role, catalyzes the 2-thiolation of uridine at the wobble position (U34) of tRNA, leading to the formation of s(2)U34. In Aquifex aeolicus (strain VF5), this protein is tRNA-specific 2-thiouridylase MnmA.